The chain runs to 177 residues: Putative pre-16S rRNA nuclease (177 aa).

It belongs to the YqgF nuclease family.

The protein resides in the cytoplasm. Functionally, could be a nuclease involved in processing of the 5'-end of pre-16S rRNA. This Psychrobacter arcticus (strain DSM 17307 / VKM B-2377 / 273-4) protein is Putative pre-16S rRNA nuclease.